Consider the following 275-residue polypeptide: Elongation factor Ts (275 aa).

The interval 76-79 (TDFV) is involved in Mg(2+) ion dislocation from EF-Tu.

It belongs to the EF-Ts family.

The protein resides in the cytoplasm. Associates with the EF-Tu.GDP complex and induces the exchange of GDP to GTP. It remains bound to the aminoacyl-tRNA.EF-Tu.GTP complex up to the GTP hydrolysis stage on the ribosome. The chain is Elongation factor Ts from Corynebacterium glutamicum (strain ATCC 13032 / DSM 20300 / JCM 1318 / BCRC 11384 / CCUG 27702 / LMG 3730 / NBRC 12168 / NCIMB 10025 / NRRL B-2784 / 534).